The chain runs to 97 residues: Putative pterin-4-alpha-carbinolamine dehydratase (97 aa).

The protein belongs to the pterin-4-alpha-carbinolamine dehydratase family.

The enzyme catalyses (4aS,6R)-4a-hydroxy-L-erythro-5,6,7,8-tetrahydrobiopterin = (6R)-L-erythro-6,7-dihydrobiopterin + H2O. In Opitutus terrae (strain DSM 11246 / JCM 15787 / PB90-1), this protein is Putative pterin-4-alpha-carbinolamine dehydratase.